A 348-amino-acid polypeptide reads, in one-letter code: Cylicin-2 (348 aa).

The interval 25 to 347 is 31 X 3 AA repeats of K-K-X; sequence KKSWNQQHFA…DEKKDAKKKG (323 aa). Disordered stretches follow at residues 35 to 59 and 101 to 348; these read LLFPKPQRPGTKRRSKPSQIRDNTV and PTRT…KKGK. Basic and acidic residues-rich tracts occupy residues 103-159, 166-217, 238-267, and 276-342; these read RTVE…DAKK, KDAE…EKDS, KADEKKDEDGKKDANKGDESKDAKKDAKEI, and KPSS…EKKD. A run of 3 repeats spans residues 157–184, 185–212, and 213–240. The 3 X approximate tandem repeats stretch occupies residues 157 to 240; the sequence is AKKDSKKGKK…AIELQAVKAD (84 aa).

In terms of tissue distribution, testis.

Its subcellular location is the cytoplasm. The protein localises to the cytoskeleton. It is found in the perinuclear theca. The protein resides in the calyx. In terms of biological role, plays a role in the establishment of normal sperm morphology during spermatogenesis. It is required for acrosome attachment to the nuclear envelope, and proper manchette elongation and disassembly. The chain is Cylicin-2 (CYLC2) from Homo sapiens (Human).